A 434-amino-acid chain; its full sequence is Putative B3 domain-containing protein Os04g0347400 (434 aa).

3 consecutive DNA-binding regions (TF-B3) follow at residues 27 to 124 (SFHK…FDTT), 150 to 246 (KPQF…FGIN), and 326 to 432 (WIKK…DRVE).

The protein localises to the nucleus. This chain is Putative B3 domain-containing protein Os04g0347400, found in Oryza sativa subsp. japonica (Rice).